Reading from the N-terminus, the 118-residue chain is MTKNIHDVAYELQKAIAENEDFKTLKESYAAVQADTASKNLFDEFRTMQLSLQQKMMQGQEITEEDNQQAQEVVARIQQDAKITKLMETEQRLNVVIGDVNKIIMKPLEELYSAQQQA.

This sequence belongs to the UPF0342 family.

This Bacillus cereus (strain ATCC 14579 / DSM 31 / CCUG 7414 / JCM 2152 / NBRC 15305 / NCIMB 9373 / NCTC 2599 / NRRL B-3711) protein is UPF0342 protein BC_0880.